The following is a 444-amino-acid chain: Structure-specific endonuclease subunit SLX1 (444 aa).

Positions 23–105 (AFSCCYLLRS…QNTKVSRHAD (83 aa)) constitute a GIY-YIG domain. The SLX1-type zinc-finger motif lies at 240-295 (CGVCKQRLILQHDIIAVCSHSSCHCAAHLSCLSSHFLKDKDSDSELVPREGTCPTC). The disordered stretch occupies residues 324 to 354 (RRQRAGTPKGQGLKSVRGRGHSEDENESDAL).

This sequence belongs to the SLX1 family. As to quaternary structure, forms a heterodimer with SLX4. A divalent metal cation serves as cofactor.

Its subcellular location is the nucleus. Its function is as follows. Catalytic subunit of the SLX1-SLX4 structure-specific endonuclease that resolves DNA secondary structures generated during DNA repair and recombination. Has endonuclease activity towards branched DNA substrates, introducing single-strand cuts in duplex DNA close to junctions with ss-DNA. This Paracoccidioides lutzii (strain ATCC MYA-826 / Pb01) (Paracoccidioides brasiliensis) protein is Structure-specific endonuclease subunit SLX1.